The following is a 176-amino-acid chain: CDP-archaeol synthase (176 aa).

4 helical membrane-spanning segments follow: residues 41–61 (GLIG…FLYN), 73–93 (IITV…KSYF), 114–134 (VVGS…LNWF), and 138–158 (FDSV…SPLL).

It belongs to the CDP-archaeol synthase family. The cofactor is Mg(2+).

It is found in the cell membrane. It carries out the reaction 2,3-bis-O-(geranylgeranyl)-sn-glycerol 1-phosphate + CTP + H(+) = CDP-2,3-bis-O-(geranylgeranyl)-sn-glycerol + diphosphate. Its pathway is membrane lipid metabolism; glycerophospholipid metabolism. In terms of biological role, catalyzes the formation of CDP-2,3-bis-(O-geranylgeranyl)-sn-glycerol (CDP-archaeol) from 2,3-bis-(O-geranylgeranyl)-sn-glycerol 1-phosphate (DGGGP) and CTP. This reaction is the third ether-bond-formation step in the biosynthesis of archaeal membrane lipids. This chain is CDP-archaeol synthase, found in Methanocorpusculum labreanum (strain ATCC 43576 / DSM 4855 / Z).